A 228-amino-acid polypeptide reads, in one-letter code: Cytochrome c oxidase subunit 2 (228 aa).

The Mitochondrial intermembrane portion of the chain corresponds to 1-14 (MANHSQLGFQDASS). A helical transmembrane segment spans residues 15-45 (PIMEELVEFHDHALIVALAICSLVLYLLAHM). At 46 to 58 (LMEKLSSNAVDAQ) the chain is on the mitochondrial matrix side. Residues 59–86 (EVELIWTILPAIVLVLLALPSLQILYMM) form a helical membrane-spanning segment. The Mitochondrial intermembrane portion of the chain corresponds to 87-228 (DEIDEPDLTL…EAWSSLLSSS (142 aa)). The Cu cation site is built by His160, Cys195, Glu197, Cys199, His203, and Met206. Glu197 provides a ligand contact to Mg(2+).

This sequence belongs to the cytochrome c oxidase subunit 2 family. Component of the cytochrome c oxidase (complex IV, CIV), a multisubunit enzyme composed of 14 subunits. The complex is composed of a catalytic core of 3 subunits MT-CO1, MT-CO2 and MT-CO3, encoded in the mitochondrial DNA, and 11 supernumerary subunits COX4I, COX5A, COX5B, COX6A, COX6B, COX6C, COX7A, COX7B, COX7C, COX8 and NDUFA4, which are encoded in the nuclear genome. The complex exists as a monomer or a dimer and forms supercomplexes (SCs) in the inner mitochondrial membrane with NADH-ubiquinone oxidoreductase (complex I, CI) and ubiquinol-cytochrome c oxidoreductase (cytochrome b-c1 complex, complex III, CIII), resulting in different assemblies (supercomplex SCI(1)III(2)IV(1) and megacomplex MCI(2)III(2)IV(2)). Found in a complex with TMEM177, COA6, COX18, COX20, SCO1 and SCO2. Interacts with TMEM177 in a COX20-dependent manner. Interacts with COX20. Interacts with COX16. Requires Cu cation as cofactor.

The protein localises to the mitochondrion inner membrane. The catalysed reaction is 4 Fe(II)-[cytochrome c] + O2 + 8 H(+)(in) = 4 Fe(III)-[cytochrome c] + 2 H2O + 4 H(+)(out). Its function is as follows. Component of the cytochrome c oxidase, the last enzyme in the mitochondrial electron transport chain which drives oxidative phosphorylation. The respiratory chain contains 3 multisubunit complexes succinate dehydrogenase (complex II, CII), ubiquinol-cytochrome c oxidoreductase (cytochrome b-c1 complex, complex III, CIII) and cytochrome c oxidase (complex IV, CIV), that cooperate to transfer electrons derived from NADH and succinate to molecular oxygen, creating an electrochemical gradient over the inner membrane that drives transmembrane transport and the ATP synthase. Cytochrome c oxidase is the component of the respiratory chain that catalyzes the reduction of oxygen to water. Electrons originating from reduced cytochrome c in the intermembrane space (IMS) are transferred via the dinuclear copper A center (CU(A)) of subunit 2 and heme A of subunit 1 to the active site in subunit 1, a binuclear center (BNC) formed by heme A3 and copper B (CU(B)). The BNC reduces molecular oxygen to 2 water molecules using 4 electrons from cytochrome c in the IMS and 4 protons from the mitochondrial matrix. The polypeptide is Cytochrome c oxidase subunit 2 (MT-CO2) (Anas platyrhynchos (Mallard)).